Reading from the N-terminus, the 107-residue chain is Ferredoxin (107 aa).

The propeptide occupies 1–8 (MVSGVSRN). [2Fe-2S] cluster-binding residues include C45, C51, and C54.

Requires [2Fe-2S] cluster as cofactor.

Its subcellular location is the hydrogenosome. In terms of biological role, ferredoxins are iron-sulfur proteins that transfer electrons in a wide variety of metabolic reactions. The chain is Ferredoxin from Psalteriomonas lanterna (Amoeboflagellate).